A 511-amino-acid polypeptide reads, in one-letter code: Adenosine deaminase 2 (511 aa).

Positions 1 to 29 (MLVDGPSEWPALRFLLLAVAMSFFGSALS) are cleaved as a signal peptide. The dimerization stretch occupies residues 30 to 100 (IDETRAHLLL…HLIERSQVFN (71 aa)). Histidine 112 and histidine 114 together coordinate Zn(2+). Aspartate 115 is a binding site for substrate. Asparagine 127 carries N-linked (GlcNAc...) asparagine glycosylation. The segment at 127 to 185 (NVTYRPHCHICFTPKGIMQFRFAHPTPRTSEKCSKWILLEDYRKRVQNVTEFDDSLLRN) is PRB domain. Cysteine 137 and cysteine 159 are disulfide-bonded. Residues asparagine 174 and asparagine 185 are each glycosylated (N-linked (GlcNAc...) asparagine). Residues 204 to 211 (WSKFETIF), histidine 293, and glycine 326 each bind substrate. Histidine 356 lines the Zn(2+) pocket. Glutamate 359 functions as the Proton donor in the catalytic mechanism. Residue asparagine 378 is glycosylated (N-linked (GlcNAc...) asparagine). The Proton acceptor role is filled by histidine 384. Residue aspartate 441 coordinates Zn(2+). Aspartate 442 lines the substrate pocket.

It belongs to the metallo-dependent hydrolases superfamily. Adenosine and AMP deaminases family. ADGF subfamily. Homodimer. Interacts with adenosine receptors. Binds heparin. Zn(2+) serves as cofactor.

It localises to the secreted. It carries out the reaction adenosine + H2O + H(+) = inosine + NH4(+). Functionally, adenosine deaminase that may contribute to the degradation of extracellular adenosine, a signaling molecule that controls a variety of cellular responses. Requires elevated adenosine levels for optimal enzyme activity. Binds to cell surfaces via proteoglycans and may play a role in the regulation of cell proliferation and differentiation, independently of its enzyme activity. The polypeptide is Adenosine deaminase 2 (Pongo abelii (Sumatran orangutan)).